Here is a 79-residue protein sequence, read N- to C-terminus: Exodeoxyribonuclease 7 small subunit (79 aa).

The protein belongs to the XseB family. As to quaternary structure, heterooligomer composed of large and small subunits.

The protein localises to the cytoplasm. It catalyses the reaction Exonucleolytic cleavage in either 5'- to 3'- or 3'- to 5'-direction to yield nucleoside 5'-phosphates.. In terms of biological role, bidirectionally degrades single-stranded DNA into large acid-insoluble oligonucleotides, which are then degraded further into small acid-soluble oligonucleotides. In Haemophilus influenzae (strain PittGG), this protein is Exodeoxyribonuclease 7 small subunit.